The primary structure comprises 454 residues: Kynurenine 3-monooxygenase (454 aa).

This sequence belongs to the aromatic-ring hydroxylase family. KMO subfamily. Requires FAD as cofactor.

The catalysed reaction is L-kynurenine + NADPH + O2 + H(+) = 3-hydroxy-L-kynurenine + NADP(+) + H2O. It functions in the pathway cofactor biosynthesis; NAD(+) biosynthesis; quinolinate from L-kynurenine: step 1/3. Its function is as follows. Catalyzes the hydroxylation of L-kynurenine (L-Kyn) to form 3-hydroxy-L-kynurenine (L-3OHKyn). Required for synthesis of quinolinic acid. This is Kynurenine 3-monooxygenase from Salinispora arenicola (strain CNS-205).